Here is a 602-residue protein sequence, read N- to C-terminus: Elongation factor 4 (602 aa).

One can recognise a tr-type G domain in the interval 7–189; the sequence is KYIRNFSIVA…AIVNKVPAPD (183 aa). GTP-binding positions include 19 to 24 and 136 to 139; these read DHGKST and NKID.

This sequence belongs to the TRAFAC class translation factor GTPase superfamily. Classic translation factor GTPase family. LepA subfamily.

Its subcellular location is the cell membrane. The enzyme catalyses GTP + H2O = GDP + phosphate + H(+). Its function is as follows. Required for accurate and efficient protein synthesis under certain stress conditions. May act as a fidelity factor of the translation reaction, by catalyzing a one-codon backward translocation of tRNAs on improperly translocated ribosomes. Back-translocation proceeds from a post-translocation (POST) complex to a pre-translocation (PRE) complex, thus giving elongation factor G a second chance to translocate the tRNAs correctly. Binds to ribosomes in a GTP-dependent manner. This Clostridium botulinum (strain 657 / Type Ba4) protein is Elongation factor 4.